The chain runs to 431 residues: D-inositol 3-phosphate glycosyltransferase (431 aa).

His21 contributes to the 1D-myo-inositol 3-phosphate binding site. Residues 27–28 (QP) and Gly35 each bind UDP-N-acetyl-alpha-D-glucosamine. Residues 32–37 (DAGGMN), Arg90, Tyr123, Thr147, and Arg167 contribute to the 1D-myo-inositol 3-phosphate site. Residues Arg241, Lys246, and Gln307 each coordinate UDP-N-acetyl-alpha-D-glucosamine. Mg(2+) contacts are provided by Tyr316, Arg317, and Ala319. UDP-N-acetyl-alpha-D-glucosamine contacts are provided by Glu329 and Glu337. Thr343 provides a ligand contact to Mg(2+).

Belongs to the glycosyltransferase group 1 family. MshA subfamily. Homodimer.

The catalysed reaction is 1D-myo-inositol 3-phosphate + UDP-N-acetyl-alpha-D-glucosamine = 1D-myo-inositol 2-acetamido-2-deoxy-alpha-D-glucopyranoside 3-phosphate + UDP + H(+). In terms of biological role, catalyzes the transfer of a N-acetyl-glucosamine moiety to 1D-myo-inositol 3-phosphate to produce 1D-myo-inositol 2-acetamido-2-deoxy-glucopyranoside 3-phosphate in the mycothiol biosynthesis pathway. This Saccharomonospora viridis (strain ATCC 15386 / DSM 43017 / JCM 3036 / CCUG 5913 / NBRC 12207 / NCIMB 9602 / P101) (Thermoactinomyces viridis) protein is D-inositol 3-phosphate glycosyltransferase.